We begin with the raw amino-acid sequence, 463 residues long: Glycine--tRNA ligase (463 aa).

2 residues coordinate substrate: Arg-98 and Glu-170. Residues 202 to 204, 212 to 217, 287 to 288, and 331 to 334 each bind ATP; these read RNE, FRTREF, EL, and GIER. 217–221 is a binding site for substrate; the sequence is FEQFE. Residue 327 to 331 coordinates substrate; that stretch reads EPSLG.

This sequence belongs to the class-II aminoacyl-tRNA synthetase family. As to quaternary structure, homodimer.

Its subcellular location is the cytoplasm. It catalyses the reaction tRNA(Gly) + glycine + ATP = glycyl-tRNA(Gly) + AMP + diphosphate. Its function is as follows. Catalyzes the attachment of glycine to tRNA(Gly). This is Glycine--tRNA ligase from Mycoplasmoides gallisepticum (strain R(low / passage 15 / clone 2)) (Mycoplasma gallisepticum).